The following is a 160-amino-acid chain: Epithelial membrane protein 1 (160 aa).

A helical membrane pass occupies residues 1–21 (MLVLLAAIFVVHIATCVMLFV). 2 N-linked (GlcNAc...) asparagine glycosylation sites follow: Asn35 and Asn43. The next 3 membrane-spanning stretches (helical) occupy residues 67–87 (FMILSIIFSVISLIIFVFQLF), 95–115 (FFLSGATMLVCWLCVLIGASI), and 137–157 (FILAWICFCFSFVVGVLYLVL).

The protein belongs to the PMP-22/EMP/MP20 family. In terms of tissue distribution, most abundant in squamous epithelia.

It localises to the membrane. The protein is Epithelial membrane protein 1 (EMP1) of Oryctolagus cuniculus (Rabbit).